The chain runs to 1035 residues: Protein SEY1 homolog (1035 aa).

Positions 32-267 (DGTFICVSVF…TTLIPLTDSS (236 aa)) constitute a GB1/RHD3-type G domain. 42 to 49 (GPQSSGKS) is a GTP binding site.

It belongs to the TRAFAC class dynamin-like GTPase superfamily. GB1/RHD3 GTPase family. RHD3 subfamily.

It localises to the endoplasmic reticulum membrane. Its function is as follows. Probable GTP-binding protein that may be involved in cell development. This is Protein SEY1 homolog from Giardia intestinalis (strain ATCC 50803 / WB clone C6) (Giardia lamblia).